A 670-amino-acid polypeptide reads, in one-letter code: Kinesin-like protein KIF2B (670 aa).

At Thr-122 the chain carries Phosphothreonine; by PLK1. The stretch at 146–173 forms a coiled coil; that stretch reads CLQEIEKVQKQREKRRRLQQEIRARRAL. Ser-201 is subject to Phosphoserine; by PLK1. A Kinesin motor domain is found at 210–540; that stretch reads RICVCVRKRP…LRYANRVKEL (331 aa). An ATP-binding site is contributed by 300–307; the sequence is GQTGSGKT.

This sequence belongs to the TRAFAC class myosin-kinesin ATPase superfamily. Kinesin family. MCAK/KIF2 subfamily. Phosphorylation at Thr-122 by PLK1 is required for activity in the correction of kinetochore-microtubules attachment errors, while phosphorylation at Ser-201 also by PLK1 is required for the kinetochore localization and activity in prometaphase.

It localises to the cytoplasm. It is found in the cytoskeleton. The protein resides in the microtubule organizing center. Its subcellular location is the centrosome. The protein localises to the spindle. It localises to the chromosome. It is found in the centromere. The protein resides in the kinetochore. Its function is as follows. Plus end-directed microtubule-dependent motor required for spindle assembly and chromosome movement during mitosis. Has microtubule depolymerization activity. Plays a role in chromosome congression. The sequence is that of Kinesin-like protein KIF2B (KIF2B) from Macaca fascicularis (Crab-eating macaque).